The following is a 246-amino-acid chain: MQPFLLLLAFLLTPGAGTEEIIGGHEAKPHSRPYMAFVQFLQEKSRKRCGGILVRKDFVLTAAHCQGSSINVTLGAHNIKEQERTQQFIPVKRPIPHPAYNPKNFSNDIMLLQLERKAKWTTAVRPLRLPSSKAQVKPGQLCSVAGWGYVSMSTLATTLQEVLLTVQKDCQCERLFHGNYSRATEICVGDPKKTQTGFKGDSGGPLVCKDVAQGILSYGNKKGTPPGVYIKVSHFLPWIKRTMKRL.

A signal peptide spans 1–18 (MQPFLLLLAFLLTPGAGT). Positions 19–20 (EE) are cleaved as a propeptide — activation peptide. Residues 21–244 (IIGGHEAKPH…FLPWIKRTMK (224 aa)) enclose the Peptidase S1 domain. Positions 46–48 (RKR) are mediates the preference for acidic residues at the P3' and P4' sites. Cysteine 49 and cysteine 65 are oxidised to a cystine. Histidine 64 acts as the Charge relay system in catalysis. N-linked (GlcNAc...) asparagine glycans are attached at residues asparagine 71 and asparagine 104. The active-site Charge relay system is aspartate 108. Disulfide bonds link cysteine 142–cysteine 208 and cysteine 172–cysteine 187. A glycan (N-linked (GlcNAc...) asparagine) is linked at asparagine 179. The Charge relay system role is filled by serine 202.

It belongs to the peptidase S1 family. Granzyme subfamily. Constitutively expressed in NK cells.

It is found in the cytolytic granule. Inhibited by SERPINB1. In terms of biological role, cytotoxic chymotrypsin-like serine protease with preference for bulky and aromatic residues at the P1 position and acidic residues at the P3' and P4' sites. Probably necessary for target cell lysis in cell-mediated immune responses. Participates in the antiviral response via direct cleavage of several proteins essential for viral replication. The chain is Granzyme H (GZMH) from Homo sapiens (Human).